A 383-amino-acid chain; its full sequence is LIM/homeobox protein Lhx3 (383 aa).

LIM zinc-binding domains lie at 14–73 and 73–136; these read PLCA…RFGT and TKCA…AKQR. Residue Thr48 is modified to Phosphothreonine. Phosphoserine is present on Ser56. A DNA-binding region (homeobox) is located at residues 142–201; it reads AKRPRTTITAKQLETLKSAYNTSPKPARHVREQLSSETGLDMRVVQVWFQNRRAKEKRLK. The segment at 197–383 is disordered; sequence EKRLKKDAGR…WLDEVDHAQF (187 aa). Phosphotyrosine is present on Tyr212. Ser223 is modified (phosphoserine). Residues 307–334 are compositionally biased toward low complexity; it reads PAALQSLPGPQPLLSSLVYPEAGLGLVP. Residues 335–344 are compositionally biased toward pro residues; it reads AGPPGGPPPM.

As to quaternary structure, interacts with POU1F1. At neuronal promoters, interacts with LDB1, in motor neurons LDB1 is displaced by ISL1 and a ternary complex is formed in which ISL1 contacts both LHX3 and LDB1; allosteric structural changes in the DNA binding domain of LHX3, induced by the ISL1-LHX3 interaction, may explain differences in sequence specificity of the different complexes. Interacts with LDB2. May interact with CITED2/MRG1.

The protein resides in the nucleus. Transcription factor. Recognizes and binds to the consensus sequence motif 5'-AATTAATTA-3' in the regulatory elements of target genes, such as glycoprotein hormones alpha chain CGA and visual system homeobox CHX10, positively modulating transcription; transcription can be co-activated by LDB2. Synergistically enhances transcription from the prolactin promoter in cooperation with POU1F1/Pit-1. Required for the establishment of the specialized cells of the pituitary gland and the nervous system. Involved in the development of interneurons and motor neurons in cooperation with LDB1 and ISL1. The sequence is that of LIM/homeobox protein Lhx3 (LHX3) from Sus scrofa (Pig).